Reading from the N-terminus, the 302-residue chain is Probable protein S-acyltransferase 13 (302 aa).

2 helical membrane passes run 17–37 (SIMI…VVVV) and 56–76 (VLAF…SVVV). The region spanning 116–166 (RYCRKCNQYKPPRSHHCSVCGRCILKMDHHCVWVVNCVGANNYKSFLLFLF) is the DHHC domain. The active-site S-palmitoyl cysteine intermediate is the Cys146. A run of 2 helical transmembrane segments spans residues 166 to 186 (FYTF…FLVF) and 204 to 224 (SFVA…FLIM).

This sequence belongs to the DHHC palmitoyltransferase family.

The protein localises to the cell membrane. It localises to the cytoplasmic vesicle membrane. It catalyses the reaction L-cysteinyl-[protein] + hexadecanoyl-CoA = S-hexadecanoyl-L-cysteinyl-[protein] + CoA. Palmitoyl acyltransferase. The protein is Probable protein S-acyltransferase 13 (PAT13) of Arabidopsis thaliana (Mouse-ear cress).